The sequence spans 95 residues: Large ribosomal subunit protein bL31 (95 aa).

The disordered stretch occupies residues 68–95; that stretch reads AGLNNINKKPEKKKIQGKSEPRKSLNEL. Over residues 80–95 the composition is skewed to basic and acidic residues; sequence KKIQGKSEPRKSLNEL.

This sequence belongs to the bacterial ribosomal protein bL31 family. Type A subfamily. In terms of assembly, part of the 50S ribosomal subunit.

Functionally, binds the 23S rRNA. The chain is Large ribosomal subunit protein bL31 from Ureaplasma parvum serovar 3 (strain ATCC 700970).